The sequence spans 125 residues: Histone H2A, orphon (125 aa).

Over residues methionine 1–serine 18 the composition is skewed to basic residues. The segment at methionine 1–alanine 21 is disordered. At serine 2 the chain carries N-acetylserine. The residue at position 2 (serine 2) is a Phosphoserine. A Glycyl lysine isopeptide (Lys-Gly) (interchain with G-Cter in ubiquitin) cross-link involves residue lysine 119.

Belongs to the histone H2A family. The nucleosome is a histone octamer containing two molecules each of H2A, H2B, H3 and H4 assembled in one H3-H4 heterotetramer and two H2A-H2B heterodimers. The octamer wraps approximately 147 bp of DNA. Monoubiquitination of Lys-119 gives a specific tag for epigenetic transcriptional repression. In terms of processing, phosphorylation on Ser-2 is enhanced during mitosis. Phosphorylation on Ser-2 directly represses transcription.

It localises to the nucleus. Its subcellular location is the chromosome. In terms of biological role, core component of nucleosome. Nucleosomes wrap and compact DNA into chromatin, limiting DNA accessibility to the cellular machineries which require DNA as a template. Histones thereby play a central role in transcription regulation, DNA repair, DNA replication and chromosomal stability. DNA accessibility is regulated via a complex set of post-translational modifications of histones, also called histone code, and nucleosome remodeling. This chain is Histone H2A, orphon, found in Chironomus thummi thummi (Midge).